The primary structure comprises 519 residues: ATP synthase subunit alpha (519 aa).

174–181 lines the ATP pocket; that stretch reads GDRQTGKT.

This sequence belongs to the ATPase alpha/beta chains family. As to quaternary structure, F-type ATPases have 2 components, CF(1) - the catalytic core - and CF(0) - the membrane proton channel. CF(1) has five subunits: alpha(3), beta(3), gamma(1), delta(1), epsilon(1). CF(0) has three main subunits: a(1), b(2) and c(9-12). The alpha and beta chains form an alternating ring which encloses part of the gamma chain. CF(1) is attached to CF(0) by a central stalk formed by the gamma and epsilon chains, while a peripheral stalk is formed by the delta and b chains.

Its subcellular location is the cell inner membrane. The catalysed reaction is ATP + H2O + 4 H(+)(in) = ADP + phosphate + 5 H(+)(out). Produces ATP from ADP in the presence of a proton gradient across the membrane. The alpha chain is a regulatory subunit. The protein is ATP synthase subunit alpha of Paracidovorax citrulli (strain AAC00-1) (Acidovorax citrulli).